The following is a 537-amino-acid chain: Chaperonin GroEL (537 aa).

ATP-binding positions include 31–34 (TLGP), 87–91 (DGTTT), Gly-415, and Asp-495.

Belongs to the chaperonin (HSP60) family. Forms a cylinder of 14 subunits composed of two heptameric rings stacked back-to-back. Interacts with the co-chaperonin GroES.

Its subcellular location is the cytoplasm. The catalysed reaction is ATP + H2O + a folded polypeptide = ADP + phosphate + an unfolded polypeptide.. In terms of biological role, together with its co-chaperonin GroES, plays an essential role in assisting protein folding. The GroEL-GroES system forms a nano-cage that allows encapsulation of the non-native substrate proteins and provides a physical environment optimized to promote and accelerate protein folding. This is Chaperonin GroEL from Methanoregula boonei (strain DSM 21154 / JCM 14090 / 6A8).